Here is a 440-residue protein sequence, read N- to C-terminus: GTPase Der (440 aa).

2 EngA-type G domains span residues 3-167 (PIIA…PYDR) and 176-351 (TRIA…EQYC). GTP-binding positions include 9–16 (GRPNVGKS), 56–60 (DTGGF), 119–122 (NKVD), 182–189 (GRPNVGKS), 229–233 (DTAGI), and 294–297 (NKWD). Residues 352–436 (KRVTTGELNR…PLKLIFRGRD (85 aa)) enclose the KH-like domain.

This sequence belongs to the TRAFAC class TrmE-Era-EngA-EngB-Septin-like GTPase superfamily. EngA (Der) GTPase family. Associates with the 50S ribosomal subunit.

GTPase that plays an essential role in the late steps of ribosome biogenesis. In Geobacter sp. (strain M21), this protein is GTPase Der.